A 344-amino-acid polypeptide reads, in one-letter code: Holliday junction branch migration complex subunit RuvB (344 aa).

Residues methionine 1–tyrosine 185 are large ATPase domain (RuvB-L). ATP is bound by residues leucine 24, arginine 25, glycine 66, lysine 69, threonine 70, threonine 71, glutamate 132–tyrosine 134, arginine 175, tyrosine 185, and arginine 222. Threonine 70 serves as a coordination point for Mg(2+). The tract at residues threonine 186–aspartate 256 is small ATPAse domain (RuvB-S). Positions glutamate 259 to glutamate 344 are head domain (RuvB-H). The DNA site is built by arginine 314 and arginine 319.

Belongs to the RuvB family. As to quaternary structure, homohexamer. Forms an RuvA(8)-RuvB(12)-Holliday junction (HJ) complex. HJ DNA is sandwiched between 2 RuvA tetramers; dsDNA enters through RuvA and exits via RuvB. An RuvB hexamer assembles on each DNA strand where it exits the tetramer. Each RuvB hexamer is contacted by two RuvA subunits (via domain III) on 2 adjacent RuvB subunits; this complex drives branch migration. In the full resolvosome a probable DNA-RuvA(4)-RuvB(12)-RuvC(2) complex forms which resolves the HJ.

It is found in the cytoplasm. The enzyme catalyses ATP + H2O = ADP + phosphate + H(+). The RuvA-RuvB-RuvC complex processes Holliday junction (HJ) DNA during genetic recombination and DNA repair, while the RuvA-RuvB complex plays an important role in the rescue of blocked DNA replication forks via replication fork reversal (RFR). RuvA specifically binds to HJ cruciform DNA, conferring on it an open structure. The RuvB hexamer acts as an ATP-dependent pump, pulling dsDNA into and through the RuvAB complex. RuvB forms 2 homohexamers on either side of HJ DNA bound by 1 or 2 RuvA tetramers; 4 subunits per hexamer contact DNA at a time. Coordinated motions by a converter formed by DNA-disengaged RuvB subunits stimulates ATP hydrolysis and nucleotide exchange. Immobilization of the converter enables RuvB to convert the ATP-contained energy into a lever motion, pulling 2 nucleotides of DNA out of the RuvA tetramer per ATP hydrolyzed, thus driving DNA branch migration. The RuvB motors rotate together with the DNA substrate, which together with the progressing nucleotide cycle form the mechanistic basis for DNA recombination by continuous HJ branch migration. Branch migration allows RuvC to scan DNA until it finds its consensus sequence, where it cleaves and resolves cruciform DNA. In Salinibacter ruber (strain DSM 13855 / M31), this protein is Holliday junction branch migration complex subunit RuvB.